Here is a 224-residue protein sequence, read N- to C-terminus: Cytidylate kinase (224 aa).

10 to 18 (GPSGVGKGT) is a binding site for ATP.

The protein belongs to the cytidylate kinase family. Type 1 subfamily.

It localises to the cytoplasm. The catalysed reaction is CMP + ATP = CDP + ADP. It catalyses the reaction dCMP + ATP = dCDP + ADP. This Haemophilus ducreyi (strain 35000HP / ATCC 700724) protein is Cytidylate kinase.